Reading from the N-terminus, the 405-residue chain is MIQWFLKYRPRSLKDVENQDDAKKQLQEWIESWLNGNSNVKAVLLHGPPGVGKTVLAEALAHDYNFELLEMNASDSRKLQDIKSIAEKAAVYGSIFGTKGKLILLDEVDGINVREDTGAIQGILELIEKTKYPIIMTANDPWNPGLRELRNKAKMIELSKLGKYPLRRILKKICQAEKIICDDEALNYIIDSSEGDARYAINILQGIGEGYGKVTLNLVESLAKRKERELDPFETLRDIFWARYAWQAKNAATSAQIDYDMLIRWISENIPIQYDNIEDIWRAFDALSRASIFLKRAKSGDWDLLSYAYDMMSSGVAFAEPEKKKPNWKPKWKKYQFPSYIQLLSKSKDIRDTRDEIIKKLAIHSSFNKALNDTYPFFLLFYKKYDKHLNLNTKEKEYLSSISKS.

47–54 (GPPGVGKT) contributes to the ATP binding site.

Belongs to the activator 1 small subunits family. RfcL subfamily. Heteropentamer composed of four small subunits (RfcS) and one large subunit (RfcL). Probably interacts with PCNA subunit PCNA3.

In terms of biological role, part of the RFC clamp loader complex which loads the PCNA sliding clamp onto DNA. The complex possesses DNA-dependent ATPase activity. The sequence is that of Replication factor C large subunit (rfcL) from Saccharolobus solfataricus (strain ATCC 35092 / DSM 1617 / JCM 11322 / P2) (Sulfolobus solfataricus).